The primary structure comprises 255 residues: Cobalt-precorrin-6A reductase (255 aa).

This sequence belongs to the precorrin-6x reductase family.

It carries out the reaction Co-precorrin-6B + NAD(+) = Co-precorrin-6A + NADH + H(+). It participates in cofactor biosynthesis; adenosylcobalamin biosynthesis; cob(II)yrinate a,c-diamide from sirohydrochlorin (anaerobic route): step 7/10. Its function is as follows. Catalyzes the reduction of the macrocycle of cobalt-precorrin-6A to cobalt-precorrin-6B. This is Cobalt-precorrin-6A reductase (cbiJ) from Priestia megaterium (Bacillus megaterium).